The chain runs to 481 residues: Regulator of G-protein signaling 1 (481 aa).

Residues 1 to 31 form a disordered region; the sequence is MPALHNPSSPPPSYEAVTSYRNGNSIDSGDK. The tract at residues 33–227 is fungal-DR; that stretch reads QQCSRLMKIT…SVHEIGKSKN (195 aa). The region spanning 232 to 312 is the DEP domain; the sequence is PVYSVSSPSP…KGVSYFLTGK (81 aa). The region spanning 344 to 474 is the RGS domain; sequence ILETILRKPN…AGDSLLKFLE (131 aa).

It localises to the nucleus. The protein localises to the cytoplasm. Its function is as follows. Negatively regulates pheromone signaling during mating. Acts in a negative feedback loop that is essential for the mating process. This loop acts to down-regulate cellular sensitivity to pheromone. Activated by ste11. The sequence is that of Regulator of G-protein signaling 1 (rgs1) from Schizosaccharomyces pombe (strain 972 / ATCC 24843) (Fission yeast).